The primary structure comprises 393 residues: Protein TsgA homolog (393 aa).

12 consecutive transmembrane segments (helical) span residues 11 to 31 (WISF…GMVM), 51 to 71 (FLNA…EIIP), 78 to 98 (FGFV…SLAL), 101 to 121 (AAMF…TFLI), 134 to 154 (LLFT…VAAY), 162 to 182 (WYWV…LTFG), 206 to 226 (IGVL…LGFI), 245 to 265 (TLVS…SFIL), 273 to 293 (ILTV…KAQP), 297 to 317 (AWFI…IITL), 332 to 352 (FVLT…GPIV), and 361 to 381 (LLTA…LGFV).

The protein belongs to the major facilitator superfamily. TsgA family.

The protein resides in the cell inner membrane. The protein is Protein TsgA homolog of Citrobacter koseri (strain ATCC BAA-895 / CDC 4225-83 / SGSC4696).